Reading from the N-terminus, the 142-residue chain is Large ribosomal subunit protein bL19 (142 aa).

The protein belongs to the bacterial ribosomal protein bL19 family.

In terms of biological role, this protein is located at the 30S-50S ribosomal subunit interface and may play a role in the structure and function of the aminoacyl-tRNA binding site. This is Large ribosomal subunit protein bL19 from Psychrobacter cryohalolentis (strain ATCC BAA-1226 / DSM 17306 / VKM B-2378 / K5).